The chain runs to 926 residues: Up-regulator of cell proliferation (926 aa).

Ser-3 is subject to Phosphoserine. The region spanning 689–924 (RSRLVVLSAL…NIQQLIELLR (236 aa)) is the VLIG-type G domain.

It belongs to the TRAFAC class dynamin-like GTPase superfamily. Very large inducible GTPase (VLIG) family.

It localises to the cytoplasm. It is found in the nucleus. In terms of biological role, may be involved in cell cycle progression through the regulation of cyclin D1 expression. The chain is Up-regulator of cell proliferation (Urgcp) from Mus musculus (Mouse).